The sequence spans 351 residues: Ion-translocating oxidoreductase complex subunit D (351 aa).

3 helical membrane passes run 37 to 57 (YFFG…AILA), 88 to 108 (AIPP…AIVI), and 123 to 143 (PAMA…TTWL). Thr-187 carries the FMN phosphoryl threonine modification. 4 helical membrane passes run 214–234 (FAGL…LFLL), 241–261 (WHIP…FAVF), 270–290 (IFNL…TDPV), and 300–317 (LYYG…RSWG).

It belongs to the NqrB/RnfD family. As to quaternary structure, the complex is composed of six subunits: RnfA, RnfB, RnfC, RnfD, RnfE and RnfG. FMN is required as a cofactor.

It is found in the cell inner membrane. Its function is as follows. Part of a membrane-bound complex that couples electron transfer with translocation of ions across the membrane. This is Ion-translocating oxidoreductase complex subunit D from Aliivibrio salmonicida (strain LFI1238) (Vibrio salmonicida (strain LFI1238)).